Reading from the N-terminus, the 432-residue chain is Glutamyl-tRNA reductase (432 aa).

Substrate is bound by residues 55–58, serine 114, 119–121, and glutamine 125; these read TCNR and ETQ. The Nucleophile role is filled by cysteine 56. An NADP(+)-binding site is contributed by 194 to 199; that stretch reads GAGEMI.

This sequence belongs to the glutamyl-tRNA reductase family. In terms of assembly, homodimer.

The enzyme catalyses (S)-4-amino-5-oxopentanoate + tRNA(Glu) + NADP(+) = L-glutamyl-tRNA(Glu) + NADPH + H(+). It functions in the pathway porphyrin-containing compound metabolism; protoporphyrin-IX biosynthesis; 5-aminolevulinate from L-glutamyl-tRNA(Glu): step 1/2. Catalyzes the NADPH-dependent reduction of glutamyl-tRNA(Glu) to glutamate 1-semialdehyde (GSA). In Burkholderia pseudomallei (strain 1710b), this protein is Glutamyl-tRNA reductase.